Here is a 238-residue protein sequence, read N- to C-terminus: Uridylate kinase (238 aa).

Residue 11-14 (KLSG) participates in ATP binding. Gly52 is a binding site for UMP. Residues Gly53 and Arg57 each coordinate ATP. Residues Asp72 and 134-141 (TGFSYFTT) contribute to the UMP site. ATP is bound by residues Asn162, Tyr168, and Asp171.

The protein belongs to the UMP kinase family. Homohexamer.

It is found in the cytoplasm. It carries out the reaction UMP + ATP = UDP + ADP. It functions in the pathway pyrimidine metabolism; CTP biosynthesis via de novo pathway; UDP from UMP (UMPK route): step 1/1. Its activity is regulated as follows. Inhibited by UTP. Catalyzes the reversible phosphorylation of UMP to UDP. The protein is Uridylate kinase of Mesoplasma florum (strain ATCC 33453 / NBRC 100688 / NCTC 11704 / L1) (Acholeplasma florum).